The chain runs to 383 residues: Anhydro-N-acetylmuramic acid kinase (383 aa).

9 to 16 (GTSVDSID) contributes to the ATP binding site.

It belongs to the anhydro-N-acetylmuramic acid kinase family.

The enzyme catalyses 1,6-anhydro-N-acetyl-beta-muramate + ATP + H2O = N-acetyl-D-muramate 6-phosphate + ADP + H(+). It participates in amino-sugar metabolism; 1,6-anhydro-N-acetylmuramate degradation. The protein operates within cell wall biogenesis; peptidoglycan recycling. Its function is as follows. Catalyzes the specific phosphorylation of 1,6-anhydro-N-acetylmuramic acid (anhMurNAc) with the simultaneous cleavage of the 1,6-anhydro ring, generating MurNAc-6-P. Is required for the utilization of anhMurNAc either imported from the medium or derived from its own cell wall murein, and thus plays a role in cell wall recycling. The sequence is that of Anhydro-N-acetylmuramic acid kinase from Crocosphaera subtropica (strain ATCC 51142 / BH68) (Cyanothece sp. (strain ATCC 51142)).